Reading from the N-terminus, the 623-residue chain is Chaperone protein DnaK (623 aa).

The residue at position 197 (Thr197) is a Phosphothreonine; by autocatalysis. Positions 595–615 are enriched in basic and acidic residues; sequence AENMYKKDEPNTANDKKKKDD. The disordered stretch occupies residues 595-623; sequence AENMYKKDEPNTANDKKKKDDDVIDAEVE.

It belongs to the heat shock protein 70 family.

Acts as a chaperone. This is Chaperone protein DnaK from Campylobacter jejuni subsp. doylei (strain ATCC BAA-1458 / RM4099 / 269.97).